The primary structure comprises 299 residues: Oxygen-dependent coproporphyrinogen-III oxidase (299 aa).

Ser-92 is a binding site for substrate. Mn(2+)-binding residues include His-96 and His-106. His-106 serves as the catalytic Proton donor. A substrate-binding site is contributed by 108–110 (NVR). Residues His-145 and His-175 each contribute to the Mn(2+) site. The segment at 240–275 (YVEFNLVWDRGTLFGLQTGGRTESILMSMPPLVRWE) is important for dimerization. 258-260 (GGR) contacts substrate.

The protein belongs to the aerobic coproporphyrinogen-III oxidase family. In terms of assembly, homodimer. Requires Mn(2+) as cofactor.

The protein localises to the cytoplasm. The catalysed reaction is coproporphyrinogen III + O2 + 2 H(+) = protoporphyrinogen IX + 2 CO2 + 2 H2O. Its pathway is porphyrin-containing compound metabolism; protoporphyrin-IX biosynthesis; protoporphyrinogen-IX from coproporphyrinogen-III (O2 route): step 1/1. In terms of biological role, involved in the heme biosynthesis. Catalyzes the aerobic oxidative decarboxylation of propionate groups of rings A and B of coproporphyrinogen-III to yield the vinyl groups in protoporphyrinogen-IX. In Escherichia coli (strain SE11), this protein is Oxygen-dependent coproporphyrinogen-III oxidase.